We begin with the raw amino-acid sequence, 332 residues long: DnAJ-like protein slr0093 (332 aa).

The J domain occupies 6 to 75 (FKDYYQILGV…RQKYDQFGRY (70 aa)).

This is DnAJ-like protein slr0093 from Synechocystis sp. (strain ATCC 27184 / PCC 6803 / Kazusa).